An 81-amino-acid chain; its full sequence is Cytochrome b559 subunit alpha (81 aa).

The chain crosses the membrane as a helical span at residues 21-35; that stretch reads VIHSITIPMLFVAGW. His-23 lines the heme pocket.

It belongs to the PsbE/PsbF family. As to quaternary structure, heterodimer of an alpha subunit and a beta subunit. PSII is composed of 1 copy each of membrane proteins PsbA, PsbB, PsbC, PsbD, PsbE, PsbF, PsbH, PsbI, PsbJ, PsbK, PsbL, PsbM, PsbT, PsbX, PsbY, PsbZ, Psb30/Ycf12, peripheral proteins PsbO, CyanoQ (PsbQ), PsbU, PsbV and a large number of cofactors. It forms dimeric complexes. It depends on heme b as a cofactor.

The protein localises to the cellular thylakoid membrane. Functionally, this b-type cytochrome is tightly associated with the reaction center of photosystem II (PSII). PSII is a light-driven water:plastoquinone oxidoreductase that uses light energy to abstract electrons from H(2)O, generating O(2) and a proton gradient subsequently used for ATP formation. It consists of a core antenna complex that captures photons, and an electron transfer chain that converts photonic excitation into a charge separation. This Gloeothece citriformis (strain PCC 7424) (Cyanothece sp. (strain PCC 7424)) protein is Cytochrome b559 subunit alpha.